A 155-amino-acid chain; its full sequence is SsrA-binding protein (155 aa).

Positions 132–155 (DKREDLKQKQMKRDVDRAIKDHMR) are disordered.

It belongs to the SmpB family.

It localises to the cytoplasm. Required for rescue of stalled ribosomes mediated by trans-translation. Binds to transfer-messenger RNA (tmRNA), required for stable association of tmRNA with ribosomes. tmRNA and SmpB together mimic tRNA shape, replacing the anticodon stem-loop with SmpB. tmRNA is encoded by the ssrA gene; the 2 termini fold to resemble tRNA(Ala) and it encodes a 'tag peptide', a short internal open reading frame. During trans-translation Ala-aminoacylated tmRNA acts like a tRNA, entering the A-site of stalled ribosomes, displacing the stalled mRNA. The ribosome then switches to translate the ORF on the tmRNA; the nascent peptide is terminated with the 'tag peptide' encoded by the tmRNA and targeted for degradation. The ribosome is freed to recommence translation, which seems to be the essential function of trans-translation. This is SsrA-binding protein from Oceanobacillus iheyensis (strain DSM 14371 / CIP 107618 / JCM 11309 / KCTC 3954 / HTE831).